Reading from the N-terminus, the 497-residue chain is Glutamyl-tRNA(Gln) amidotransferase subunit A (497 aa).

Residues lysine 85 and serine 160 each act as charge relay system in the active site. Serine 184 acts as the Acyl-ester intermediate in catalysis.

Belongs to the amidase family. GatA subfamily. In terms of assembly, heterotrimer of A, B and C subunits.

The catalysed reaction is L-glutamyl-tRNA(Gln) + L-glutamine + ATP + H2O = L-glutaminyl-tRNA(Gln) + L-glutamate + ADP + phosphate + H(+). In terms of biological role, allows the formation of correctly charged Gln-tRNA(Gln) through the transamidation of misacylated Glu-tRNA(Gln) in organisms which lack glutaminyl-tRNA synthetase. The reaction takes place in the presence of glutamine and ATP through an activated gamma-phospho-Glu-tRNA(Gln). In Mycobacterium leprae (strain TN), this protein is Glutamyl-tRNA(Gln) amidotransferase subunit A (gatA).